A 256-amino-acid polypeptide reads, in one-letter code: Flap endonuclease Xni (256 aa).

D105 is a binding site for Mg(2+). A 5'-3' exonuclease domain is found at 164–250 (SQFIDFLAMA…LNTRLANFRV (87 aa)). The K(+) site is built by M172, A173, P181, I183, and I186. Residues 185–190 (GIGPKS) form an interaction with DNA region.

The protein belongs to the Xni family. Mg(2+) serves as cofactor. Requires K(+) as cofactor.

Has flap endonuclease activity. During DNA replication, flap endonucleases cleave the 5'-overhanging flap structure that is generated by displacement synthesis when DNA polymerase encounters the 5'-end of a downstream Okazaki fragment. This Shewanella loihica (strain ATCC BAA-1088 / PV-4) protein is Flap endonuclease Xni.